The sequence spans 251 residues: uncharacterized protein (251 aa).

The next 4 helical transmembrane spans lie at 56-76 (LAVVIAQLTIGVLGNSLTLVA), 104-124 (IITVGITNVILFLLFVAFLLT), 184-204 (HGFVYHFIAYFVLVSSLLIIV), and 208-228 (YLIADVITTYATSLLILANIS).

It is found in the membrane. This is an uncharacterized protein from Caenorhabditis elegans.